A 424-amino-acid chain; its full sequence is Protein pellino (424 aa).

Residues 1–21 (MVKRTDGTESPILAEDGGDGH) are disordered. Ser10 is subject to Phosphoserine.

It belongs to the pellino family. As to quaternary structure, interacts with pll.

In terms of biological role, scaffold protein involved in the Toll signaling pathway via its interaction with pelle/pll kinase. This is Protein pellino (Pli) from Drosophila melanogaster (Fruit fly).